A 170-amino-acid polypeptide reads, in one-letter code: Crossover junction endodeoxyribonuclease RuvC (170 aa).

Residues Asp-8, Glu-67, and Asp-139 contribute to the active site. Positions 8, 67, and 139 each coordinate Mg(2+).

The protein belongs to the RuvC family. Homodimer which binds Holliday junction (HJ) DNA. The HJ becomes 2-fold symmetrical on binding to RuvC with unstacked arms; it has a different conformation from HJ DNA in complex with RuvA. In the full resolvosome a probable DNA-RuvA(4)-RuvB(12)-RuvC(2) complex forms which resolves the HJ. Requires Mg(2+) as cofactor.

Its subcellular location is the cytoplasm. It carries out the reaction Endonucleolytic cleavage at a junction such as a reciprocal single-stranded crossover between two homologous DNA duplexes (Holliday junction).. Functionally, the RuvA-RuvB-RuvC complex processes Holliday junction (HJ) DNA during genetic recombination and DNA repair. Endonuclease that resolves HJ intermediates. Cleaves cruciform DNA by making single-stranded nicks across the HJ at symmetrical positions within the homologous arms, yielding a 5'-phosphate and a 3'-hydroxyl group; requires a central core of homology in the junction. The consensus cleavage sequence is 5'-(A/T)TT(C/G)-3'. Cleavage occurs on the 3'-side of the TT dinucleotide at the point of strand exchange. HJ branch migration catalyzed by RuvA-RuvB allows RuvC to scan DNA until it finds its consensus sequence, where it cleaves and resolves the cruciform DNA. In Pectobacterium atrosepticum (strain SCRI 1043 / ATCC BAA-672) (Erwinia carotovora subsp. atroseptica), this protein is Crossover junction endodeoxyribonuclease RuvC.